The following is an 83-amino-acid chain: Probable insulin-like peptide alpha-type 2 (83 aa).

Positions 1 to 21 (MHTTTILICFFIFLVQVSTMD) are cleaved as a signal peptide. Disulfide bonds link cysteine 32–cysteine 66, cysteine 44–cysteine 79, and cysteine 54–cysteine 80.

This sequence belongs to the insulin family.

It is found in the secreted. The protein is Probable insulin-like peptide alpha-type 2 (ins-22) of Caenorhabditis elegans.